Reading from the N-terminus, the 38-residue chain is LGKLLDVYESRLLDVYESRVLDIYESRLGKVLDIYESR.

This sequence belongs to the GST superfamily. Phi family.

The enzyme catalyses RX + glutathione = an S-substituted glutathione + a halide anion + H(+). Functionally, conjugation of reduced glutathione to a wide number of exogenous and endogenous hydrophobic electrophiles. In plants, may have a detoxification role against certain herbicides. The protein is Glutathione S-transferase 2 of Populus euphratica (Euphrates poplar).